Here is a 93-residue protein sequence, read N- to C-terminus: Neurophysin 1 (93 aa).

7 cysteine pairs are disulfide-bonded: Cys10–Cys54, Cys13–Cys27, Cys21–Cys44, Cys28–Cys34, Cys61–Cys74, Cys68–Cys86, and Cys75–Cys80.

The protein belongs to the vasopressin/oxytocin family.

Neurophysin 1 specifically binds oxytocin. This chain is Neurophysin 1, found in Struthio camelus (Common ostrich).